The sequence spans 355 residues: Aromatic amino acid aminotransferase (355 aa).

An N6-(pyridoxal phosphate)lysine modification is found at Lys-217.

Belongs to the class-II pyridoxal-phosphate-dependent aminotransferase family. In terms of assembly, homodimer. Pyridoxal 5'-phosphate is required as a cofactor.

The enzyme catalyses an aromatic L-alpha-amino acid + 2-oxoglutarate = an aromatic oxo-acid + L-glutamate. Aminotransferase that catalyzes the conversion of aromatic amino acids and 2-oxoglutarate into corresponding aromatic oxo acids and L-glutamate. The protein is Aromatic amino acid aminotransferase of Mycobacterium avium (strain 104).